We begin with the raw amino-acid sequence, 213 residues long: Thymidylate kinase (213 aa).

11 to 18 contacts ATP; sequence GGEGAGKT.

It belongs to the thymidylate kinase family.

The enzyme catalyses dTMP + ATP = dTDP + ADP. In terms of biological role, phosphorylation of dTMP to form dTDP in both de novo and salvage pathways of dTTP synthesis. This chain is Thymidylate kinase, found in Shouchella clausii (strain KSM-K16) (Alkalihalobacillus clausii).